Consider the following 77-residue polypeptide: Translation initiation factor IF-1, chloroplastic (77 aa).

In terms of domain architecture, S1-like spans 1–71 (MKEQKWTHEG…TRGRIIYRLR (71 aa)).

Belongs to the IF-1 family. Component of the 30S ribosomal translation pre-initiation complex which assembles on the 30S ribosome in the order IF-2 and IF-3, IF-1 and N-formylmethionyl-tRNA(fMet); mRNA recruitment can occur at any time during PIC assembly.

It localises to the plastid. The protein localises to the chloroplast. One of the essential components for the initiation of protein synthesis. Stabilizes the binding of IF-2 and IF-3 on the 30S subunit to which N-formylmethionyl-tRNA(fMet) subsequently binds. Helps modulate mRNA selection, yielding the 30S pre-initiation complex (PIC). Upon addition of the 50S ribosomal subunit IF-1, IF-2 and IF-3 are released leaving the mature 70S translation initiation complex. The chain is Translation initiation factor IF-1, chloroplastic from Coffea arabica (Arabian coffee).